The primary structure comprises 78 residues: Acyl carrier protein (78 aa).

Positions 4–78 (AEIKDKVYDI…QQAIDYIVKK (75 aa)) constitute a Carrier domain. Ser-39 is subject to O-(pantetheine 4'-phosphoryl)serine.

This sequence belongs to the acyl carrier protein (ACP) family. In terms of processing, 4'-phosphopantetheine is transferred from CoA to a specific serine of apo-ACP by AcpS. This modification is essential for activity because fatty acids are bound in thioester linkage to the sulfhydryl of the prosthetic group.

It is found in the cytoplasm. The protein operates within lipid metabolism; fatty acid biosynthesis. In terms of biological role, carrier of the growing fatty acid chain in fatty acid biosynthesis. The protein is Acyl carrier protein of Chlorobium phaeovibrioides (strain DSM 265 / 1930) (Prosthecochloris vibrioformis (strain DSM 265)).